The primary structure comprises 364 residues: Probable dual-specificity RNA methyltransferase RlmN (364 aa).

Glu107 acts as the Proton acceptor in catalysis. In terms of domain architecture, Radical SAM core spans 113–346 (HDYGNSVCVT…ATIRREQGSD (234 aa)). A disulfide bridge links Cys120 with Cys351. The [4Fe-4S] cluster site is built by Cys127, Cys131, and Cys134. S-adenosyl-L-methionine-binding positions include 177 to 178 (GE), Ser209, 232 to 234 (SLH), and Asn308. Catalysis depends on Cys351, which acts as the S-methylcysteine intermediate.

The protein belongs to the radical SAM superfamily. RlmN family. [4Fe-4S] cluster is required as a cofactor.

Its subcellular location is the cytoplasm. It catalyses the reaction adenosine(2503) in 23S rRNA + 2 reduced [2Fe-2S]-[ferredoxin] + 2 S-adenosyl-L-methionine = 2-methyladenosine(2503) in 23S rRNA + 5'-deoxyadenosine + L-methionine + 2 oxidized [2Fe-2S]-[ferredoxin] + S-adenosyl-L-homocysteine. The enzyme catalyses adenosine(37) in tRNA + 2 reduced [2Fe-2S]-[ferredoxin] + 2 S-adenosyl-L-methionine = 2-methyladenosine(37) in tRNA + 5'-deoxyadenosine + L-methionine + 2 oxidized [2Fe-2S]-[ferredoxin] + S-adenosyl-L-homocysteine. In terms of biological role, specifically methylates position 2 of adenine 2503 in 23S rRNA and position 2 of adenine 37 in tRNAs. Confers resistance to some classes of antibiotics. The protein is Probable dual-specificity RNA methyltransferase RlmN of Staphylococcus haemolyticus (strain JCSC1435).